The primary structure comprises 488 residues: Bifunctional protein HldE (488 aa).

Residues M1–A330 form a ribokinase region. Residue N205–E208 participates in ATP binding. Residue D275 is part of the active site. The segment at F358–A488 is cytidylyltransferase.

It in the N-terminal section; belongs to the carbohydrate kinase PfkB family. In the C-terminal section; belongs to the cytidylyltransferase family. Homodimer.

The enzyme catalyses D-glycero-beta-D-manno-heptose 7-phosphate + ATP = D-glycero-beta-D-manno-heptose 1,7-bisphosphate + ADP + H(+). It carries out the reaction D-glycero-beta-D-manno-heptose 1-phosphate + ATP + H(+) = ADP-D-glycero-beta-D-manno-heptose + diphosphate. It participates in nucleotide-sugar biosynthesis; ADP-L-glycero-beta-D-manno-heptose biosynthesis; ADP-L-glycero-beta-D-manno-heptose from D-glycero-beta-D-manno-heptose 7-phosphate: step 1/4. The protein operates within nucleotide-sugar biosynthesis; ADP-L-glycero-beta-D-manno-heptose biosynthesis; ADP-L-glycero-beta-D-manno-heptose from D-glycero-beta-D-manno-heptose 7-phosphate: step 3/4. Catalyzes the phosphorylation of D-glycero-D-manno-heptose 7-phosphate at the C-1 position to selectively form D-glycero-beta-D-manno-heptose-1,7-bisphosphate. Its function is as follows. Catalyzes the ADP transfer from ATP to D-glycero-beta-D-manno-heptose 1-phosphate, yielding ADP-D-glycero-beta-D-manno-heptose. This chain is Bifunctional protein HldE, found in Nitrobacter winogradskyi (strain ATCC 25391 / DSM 10237 / CIP 104748 / NCIMB 11846 / Nb-255).